A 218-amino-acid polypeptide reads, in one-letter code: Thiopurine S-methyltransferase (218 aa).

The S-adenosyl-L-methionine site is built by W10, L45, E66, and R123.

It belongs to the class I-like SAM-binding methyltransferase superfamily. TPMT family.

Its subcellular location is the cytoplasm. The catalysed reaction is S-adenosyl-L-methionine + a thiopurine = S-adenosyl-L-homocysteine + a thiopurine S-methylether.. This is Thiopurine S-methyltransferase from Shewanella baltica (strain OS223).